The chain runs to 621 residues: Protein CASP (621 aa).

Residues Met-1–Val-574 are Cytoplasmic-facing. Coiled coils occupy residues Leu-101–Ile-445 and Ile-473–Ser-525. Residues Phe-575–Phe-595 traverse the membrane as a helical; Anchor for type IV membrane protein segment. At Asp-596–Gln-621 the chain is on the lumenal side.

The protein belongs to the CASP family.

It is found in the golgi apparatus membrane. May be involved in intra-Golgi retrograde transport. The sequence is that of Protein CASP (ceh-44) from Caenorhabditis elegans.